A 686-amino-acid chain; its full sequence is Protein-glutamine gamma-glutamyltransferase 2 (686 aa).

Ala2 carries the N-acetylalanine modification. Cystine bridges form between Cys230-Cys370 and Cys370-Cys371. Active-site residues include Cys277, His335, and Asp358. 5 residues coordinate Ca(2+): Asn398, Asp400, Glu437, Glu447, and Glu452. N6-acetyllysine is present on Lys468. Residue 476 to 483 (RIRVGDSM) participates in GTP binding. Ca(2+) is bound at residue Glu538. 579–582 (RDLY) serves as a coordination point for GTP. An Isoglutamyl lysine isopeptide (Gln-Lys) (interchain with K-?) cross-link involves residue Gln632.

This sequence belongs to the transglutaminase superfamily. Transglutaminase family. As to quaternary structure, monomer. Interacts with phospholipase C; promoting alpha-1 adrenergic receptor signaling. Interacts with PLCD1. Ca(2+) serves as cofactor. Post-translationally, disulfide bond formation inactivates the calcium-dependent acyltransferase activity. Cys-370 can form disulfide bonds with both Cys-230 and Cys-371: formation of a disulfide bond between Cys-230 and Cys-370 facilitates formation of the disulfide between Cys-370 and Cys-371, which promotes inactivation of the acyltransferase activity. May also form interchain disulfids between Cys-230 and Cys-370. Ca(2+) protects against disulfide bond formation and inactivation. Auto-transglutaminated: Forms covalent cross-links mediated by transglutaminase between Gln-632 and the epsilon-amino group of a lysine residue of itself or HMGB1, forming homopolymers and heteropolymers, respectively. In terms of processing, S-nitrosylated, leading to inactivation of the acyltransferase activity.

It is found in the cytoplasm. It localises to the cytosol. The protein resides in the nucleus. The protein localises to the chromosome. Its subcellular location is the secreted. It is found in the extracellular space. It localises to the extracellular matrix. The protein resides in the cell membrane. The protein localises to the mitochondrion. It catalyses the reaction L-glutaminyl-[protein] + L-lysyl-[protein] = [protein]-L-lysyl-N(6)-5-L-glutamyl-[protein] + NH4(+). The catalysed reaction is L-glutaminyl-[protein] + serotonin = 5-serotonyl-L-glutamyl-[protein] + NH4(+). It carries out the reaction L-glutaminyl-[protein] + dopamine = 5-dopaminyl-L-glutamyl-[protein] + NH4(+). The enzyme catalyses L-glutaminyl-[protein] + histamine = 5-histaminyl-L-glutamyl-[protein] + NH4(+). It catalyses the reaction L-glutaminyl-[protein] + (R)-noradrenaline = 5-(R)-noradrenalinyl-L-glutamyl-[protein] + NH4(+). The catalysed reaction is L-glutaminyl-[protein] + H2O = L-glutamyl-[protein] + NH4(+). Acyltransferase activity is regulated by the binding of GTP and Ca(2+): inactivated by GTP, which stabilizes its closed structure, thereby obstructing the accessibility of substrates to the active sites. In contrast, Ca(2+) acts as a cofactor by inducing conformational change to the active open form. In absence of Ca(2+), Mg(2+) may bind Ca(2+)-binding sites, promoting GTP-binding and subsequent inhibition of the acyltransferase activity. Extracellularly reduced and activated by CLIC3. Functionally, calcium-dependent acyltransferase that catalyzes the formation of covalent bonds between peptide-bound glutamine and various primary amines, such as gamma-amino group of peptide-bound lysine, or mono- and polyamines, thereby producing cross-linked or aminated proteins, respectively. Involved in many biological processes, such as bone development, angiogenesis, wound healing, cellular differentiation, chromatin modification and apoptosis. Acts as a protein-glutamine gamma-glutamyltransferase by mediating the cross-linking of proteins, such as ACO2, HSPB6, FN1, HMGB1, RAP1GDS1, SLC25A4/ANT1, SPP1 and WDR54. Under physiological conditions, the protein cross-linking activity is inhibited by GTP; inhibition is relieved by Ca(2+) in response to various stresses. When secreted, catalyzes cross-linking of proteins of the extracellular matrix, such as FN1 and SPP1 resulting in the formation of scaffolds. Plays a key role during apoptosis, both by (1) promoting the cross-linking of cytoskeletal proteins resulting in condensation of the cytoplasm, and by (2) mediating cross-linking proteins of the extracellular matrix, resulting in the irreversible formation of scaffolds that stabilize the integrity of the dying cells before their clearance by phagocytosis, thereby preventing the leakage of harmful intracellular components. In addition to protein cross-linking, can use different monoamine substrates to catalyze a vast array of protein post-translational modifications: mediates aminylation of serotonin, dopamine, noradrenaline or histamine into glutamine residues of target proteins to generate protein serotonylation, dopaminylation, noradrenalinylation or histaminylation, respectively. Mediates protein serotonylation of small GTPases during activation and aggregation of platelets, leading to constitutive activation of these GTPases. Plays a key role in chromatin organization by mediating serotonylation and dopaminylation of histone H3. Catalyzes serotonylation of 'Gln-5' of histone H3 (H3Q5ser) during serotonergic neuron differentiation, thereby facilitating transcription. Acts as a mediator of neurotransmission-independent role of nuclear dopamine in ventral tegmental area (VTA) neurons: catalyzes dopaminylation of 'Gln-5' of histone H3 (H3Q5dop), thereby regulating relapse-related transcriptional plasticity in the reward system. Regulates vein remodeling by mediating serotonylation and subsequent inactivation of ATP2A2/SERCA2. Also acts as a protein deamidase by mediating the side chain deamidation of specific glutamine residues of proteins to glutamate. Catalyzes specific deamidation of protein gliadin, a component of wheat gluten in the diet. May also act as an isopeptidase cleaving the previously formed cross-links. Also able to participate in signaling pathways independently of its acyltransferase activity: acts as a signal transducer in alpha-1 adrenergic receptor-mediated stimulation of phospholipase C-delta (PLCD) activity and is required for coupling alpha-1 adrenergic agonists to the stimulation of phosphoinositide lipid metabolism. The protein is Protein-glutamine gamma-glutamyltransferase 2 of Mus musculus (Mouse).